Reading from the N-terminus, the 223-residue chain is Ribonuclease 3 (223 aa).

The 123-residue stretch at 3-125 folds into the RNase III domain; that stretch reads LEKLQKKLGH…LIAAIYLDAG (123 aa). Position 38 (Glu-38) interacts with Mg(2+). The active site involves Asp-42. Mg(2+)-binding residues include Asp-111 and Glu-114. Glu-114 is a catalytic residue. Residues 152-222 form the DRBM domain; the sequence is DPKTRLQEFL…AQQAIEKLKI (71 aa).

This sequence belongs to the ribonuclease III family. As to quaternary structure, homodimer. It depends on Mg(2+) as a cofactor.

It localises to the cytoplasm. The enzyme catalyses Endonucleolytic cleavage to 5'-phosphomonoester.. Functionally, digests double-stranded RNA. Involved in the processing of primary rRNA transcript to yield the immediate precursors to the large and small rRNAs (23S and 16S). Processes some mRNAs, and tRNAs when they are encoded in the rRNA operon. Processes pre-crRNA and tracrRNA of type II CRISPR loci if present in the organism. The protein is Ribonuclease 3 of Histophilus somni (strain 2336) (Haemophilus somnus).